A 325-amino-acid chain; its full sequence is Putative metal ion transporter ZIPCO (325 aa).

Helical transmembrane passes span 5–25 (TFLA…PAYI), 46–66 (IASG…VIIL), and 74–94 (LYYI…TDIL). Asparagine 106 and asparagine 160 each carry an N-linked (GlcNAc...) asparagine glycan. 4 helical membrane passes run 179–199 (FFIV…MGSL), 239–259 (IYAW…IFSF), 264–284 (FVEI…SFNM), and 296–316 (HFIS…MILF).

The protein resides in the cytoplasmic vesicle membrane. Its function is as follows. Putative transporter for the divalent zinc and iron cations. This Plasmodium falciparum (isolate 3D7) protein is Putative metal ion transporter ZIPCO.